We begin with the raw amino-acid sequence, 246 residues long: Uridylate kinase (246 aa).

Residue 16 to 19 (KLGG) coordinates ATP. G57 provides a ligand contact to UMP. ATP is bound by residues G58 and R62. Residues D77 and 138-145 (MGMPYFST) contribute to the UMP site. 2 residues coordinate ATP: Y171 and D174.

Belongs to the UMP kinase family. As to quaternary structure, homohexamer.

It localises to the cytoplasm. The enzyme catalyses UMP + ATP = UDP + ADP. It participates in pyrimidine metabolism; CTP biosynthesis via de novo pathway; UDP from UMP (UMPK route): step 1/1. Inhibited by UTP. Functionally, catalyzes the reversible phosphorylation of UMP to UDP. The polypeptide is Uridylate kinase (Corynebacterium jeikeium (strain K411)).